The chain runs to 125 residues: MARIASVNIPDNKRLVVSLTYIYGLGTTMAKTICKKAKILEDKKVKDLTDQELISLRNIIENEYKVEGDLRREVTLNIKKKKDIRSYQGLRHIRKLPVRGQNTHSNARTRKGKAVAIAGKKKAVK.

It belongs to the universal ribosomal protein uS13 family. As to quaternary structure, part of the 30S ribosomal subunit. Forms a loose heterodimer with protein S19. Forms two bridges to the 50S subunit in the 70S ribosome.

Located at the top of the head of the 30S subunit, it contacts several helices of the 16S rRNA. In the 70S ribosome it contacts the 23S rRNA (bridge B1a) and protein L5 of the 50S subunit (bridge B1b), connecting the 2 subunits; these bridges are implicated in subunit movement. Contacts the tRNAs in the A and P-sites. This Rickettsia bellii (strain OSU 85-389) protein is Small ribosomal subunit protein uS13.